An 87-amino-acid chain; its full sequence is DNA-directed RNA polymerase subunit Rpo5 (87 aa).

It belongs to the archaeal Rpo5/eukaryotic RPB5 RNA polymerase subunit family. In terms of assembly, part of the RNA polymerase complex.

Its subcellular location is the cytoplasm. The catalysed reaction is RNA(n) + a ribonucleoside 5'-triphosphate = RNA(n+1) + diphosphate. DNA-dependent RNA polymerase (RNAP) catalyzes the transcription of DNA into RNA using the four ribonucleoside triphosphates as substrates. This is DNA-directed RNA polymerase subunit Rpo5 from Thermoplasma volcanium (strain ATCC 51530 / DSM 4299 / JCM 9571 / NBRC 15438 / GSS1).